Reading from the N-terminus, the 100-residue chain is Urease subunit gamma (100 aa).

The protein belongs to the urease gamma subunit family. In terms of assembly, heterotrimer of UreA (gamma), UreB (beta) and UreC (alpha) subunits. Three heterotrimers associate to form the active enzyme.

The protein localises to the cytoplasm. It catalyses the reaction urea + 2 H2O + H(+) = hydrogencarbonate + 2 NH4(+). Its pathway is nitrogen metabolism; urea degradation; CO(2) and NH(3) from urea (urease route): step 1/1. The sequence is that of Urease subunit gamma from Methylocella silvestris (strain DSM 15510 / CIP 108128 / LMG 27833 / NCIMB 13906 / BL2).